The following is a 691-amino-acid chain: DNA ligase (691 aa).

NAD(+) contacts are provided by residues 41–45 (DAEYD), 90–91 (SL), and Glu130. Lys132 functions as the N6-AMP-lysine intermediate in the catalytic mechanism. NAD(+) is bound by residues Arg153, Glu190, Lys307, and Lys331. Residues Cys425, Cys428, Cys443, and Cys449 each coordinate Zn(2+). Residues 610-691 (APQGVLAGKT…MHTLLEGHAR (82 aa)) enclose the BRCT domain.

Belongs to the NAD-dependent DNA ligase family. LigA subfamily. Mg(2+) is required as a cofactor. Mn(2+) serves as cofactor.

It catalyses the reaction NAD(+) + (deoxyribonucleotide)n-3'-hydroxyl + 5'-phospho-(deoxyribonucleotide)m = (deoxyribonucleotide)n+m + AMP + beta-nicotinamide D-nucleotide.. DNA ligase that catalyzes the formation of phosphodiester linkages between 5'-phosphoryl and 3'-hydroxyl groups in double-stranded DNA using NAD as a coenzyme and as the energy source for the reaction. It is essential for DNA replication and repair of damaged DNA. In Burkholderia pseudomallei (strain 668), this protein is DNA ligase.